We begin with the raw amino-acid sequence, 374 residues long: Queuine tRNA-ribosyltransferase (374 aa).

Catalysis depends on aspartate 89, which acts as the Proton acceptor. Substrate is bound by residues 89–93 (DSGGF), aspartate 143, glutamine 187, and glycine 214. Residues 245 to 251 (GVGKPED) form an RNA binding region. Aspartate 264 (nucleophile) is an active-site residue. Residues 269–273 (TRNAR) form an RNA binding; important for wobble base 34 recognition region. The Zn(2+) site is built by cysteine 302, cysteine 304, cysteine 307, and histidine 333.

Belongs to the queuine tRNA-ribosyltransferase family. Homodimer. Within each dimer, one monomer is responsible for RNA recognition and catalysis, while the other monomer binds to the replacement base PreQ1. Zn(2+) serves as cofactor.

The catalysed reaction is 7-aminomethyl-7-carbaguanine + guanosine(34) in tRNA = 7-aminomethyl-7-carbaguanosine(34) in tRNA + guanine. It participates in tRNA modification; tRNA-queuosine biosynthesis. Functionally, catalyzes the base-exchange of a guanine (G) residue with the queuine precursor 7-aminomethyl-7-deazaguanine (PreQ1) at position 34 (anticodon wobble position) in tRNAs with GU(N) anticodons (tRNA-Asp, -Asn, -His and -Tyr). Catalysis occurs through a double-displacement mechanism. The nucleophile active site attacks the C1' of nucleotide 34 to detach the guanine base from the RNA, forming a covalent enzyme-RNA intermediate. The proton acceptor active site deprotonates the incoming PreQ1, allowing a nucleophilic attack on the C1' of the ribose to form the product. After dissociation, two additional enzymatic reactions on the tRNA convert PreQ1 to queuine (Q), resulting in the hypermodified nucleoside queuosine (7-(((4,5-cis-dihydroxy-2-cyclopenten-1-yl)amino)methyl)-7-deazaguanosine). The sequence is that of Queuine tRNA-ribosyltransferase from Shewanella oneidensis (strain ATCC 700550 / JCM 31522 / CIP 106686 / LMG 19005 / NCIMB 14063 / MR-1).